The primary structure comprises 312 residues: Glyoxylate/hydroxypyruvate reductase A (312 aa).

The active site involves arginine 227. Histidine 275 serves as the catalytic Proton donor.

This sequence belongs to the D-isomer specific 2-hydroxyacid dehydrogenase family. GhrA subfamily.

The protein resides in the cytoplasm. It carries out the reaction glycolate + NADP(+) = glyoxylate + NADPH + H(+). It catalyses the reaction (R)-glycerate + NAD(+) = 3-hydroxypyruvate + NADH + H(+). The catalysed reaction is (R)-glycerate + NADP(+) = 3-hydroxypyruvate + NADPH + H(+). Its function is as follows. Catalyzes the NADPH-dependent reduction of glyoxylate and hydroxypyruvate into glycolate and glycerate, respectively. The sequence is that of Glyoxylate/hydroxypyruvate reductase A from Salmonella typhi.